The primary structure comprises 336 residues: Glyceraldehyde-3-phosphate dehydrogenase (336 aa).

NAD(+)-binding positions include 12–13, Asp-34, Arg-78, and Thr-121; that span reads RI. Residues 151 to 153, Thr-182, Arg-199, 212 to 213, and Arg-235 contribute to the D-glyceraldehyde 3-phosphate site; these read SCT and TG. Cys-152 functions as the Nucleophile in the catalytic mechanism. Asn-316 is an NAD(+) binding site.

It belongs to the glyceraldehyde-3-phosphate dehydrogenase family. In terms of assembly, homotetramer.

Its subcellular location is the cytoplasm. It catalyses the reaction D-glyceraldehyde 3-phosphate + phosphate + NAD(+) = (2R)-3-phospho-glyceroyl phosphate + NADH + H(+). It functions in the pathway carbohydrate degradation; glycolysis; pyruvate from D-glyceraldehyde 3-phosphate: step 1/5. Functionally, catalyzes the oxidative phosphorylation of glyceraldehyde 3-phosphate (G3P) to 1,3-bisphosphoglycerate (BPG) using the cofactor NAD. The first reaction step involves the formation of a hemiacetal intermediate between G3P and a cysteine residue, and this hemiacetal intermediate is then oxidized to a thioester, with concomitant reduction of NAD to NADH. The reduced NADH is then exchanged with the second NAD, and the thioester is attacked by a nucleophilic inorganic phosphate to produce BPG. The protein is Glyceraldehyde-3-phosphate dehydrogenase (gap) of Streptococcus dysgalactiae subsp. equisimilis (Streptococcus equisimilis).